Consider the following 281-residue polypeptide: Plasmanylethanolamine desaturase (281 aa).

Over 1 to 28 (MKTQEIEKKVRQQDAQVLAQGYSPAIRA) the chain is Cytoplasmic. The chain crosses the membrane as a helical span at residues 29 to 45 (MEIAAIVSFVSLEVALV). The Periplasmic segment spans residues 46-58 (YRLWGTPYAGTWL). Residues 59 to 75 (LLSAVLLGYLAADFVSG) traverse the membrane as a helical segment. Topologically, residues 76–123 (FVHWMGDTWGSTEMPVLGKALIRPFREHHVDEKAITRHDFVETNGNNC) are cytoplasmic. A helical transmembrane segment spans residues 124–138 (LISLPVAIIALCLPM). Over 139 to 142 (SGPG) the chain is Periplasmic. Residues 143–159 (WVFCASFLGAMIFWVMA) form a helical membrane-spanning segment. Residues 160–281 (TNQFHKWSHM…VQEKPASTRP (122 aa)) lie on the Cytoplasmic side of the membrane. The short motif at 164-168 (HKWSH) is the Histidine box-1 element. Positions 191 to 195 (HRIHH) match the Histidine box-2 motif.

Belongs to the fatty acid desaturase CarF family. In terms of assembly, interacts with CarR.

It is found in the cell inner membrane. The enzyme catalyses a 1-(1,2-saturated alkyl)-2-acyl-sn-glycero-3-phosphoethanolamine + 2 Fe(II)-[cytochrome b5] + O2 + 2 H(+) = a 1-O-(1Z-alkenyl)-2-acyl-sn-glycero-3-phosphoethanolamine + 2 Fe(III)-[cytochrome b5] + 2 H2O. It catalyses the reaction 1-O-(13-methyltetradecyl)-2-(13-methyltetradecanoyl)-sn-glycero-3-phosphoethanolamine + 2 Fe(II)-[cytochrome b5] + O2 + 2 H(+) = 1-O-(1Z-13-methyltetradecenyl)-2-(13-methyltetradecanoyl)-sn-glycero-3-phosphoethanolamine + 2 Fe(III)-[cytochrome b5] + 2 H2O. Functionally, plasmanylethanolamine desaturase involved in plasmalogen biogenesis in the membrane, required for light-induced carotenogenesis. Plasmalogens are glycerophospholipids with a hydrocarbon chain linked by a vinyl ether bond at the glycerol sn-1 position, and are involved in antioxidative and signaling mechanisms, most precisely in sensing photooxidative stress through singlet oxygen. Participates in the light-dependent inactivation of the antisigma factor CarR. Mediates signaling by singlet oxygen, generated via photoexcited protoporphyrin IX. The sequence is that of Plasmanylethanolamine desaturase from Myxococcus xanthus.